Reading from the N-terminus, the 338-residue chain is 1-aminocyclopropane-1-carboxylate deaminase (338 aa).

Lysine 51 bears the N6-(pyridoxal phosphate)lysine mark. The active-site Nucleophile is the serine 78.

Belongs to the ACC deaminase/D-cysteine desulfhydrase family. Homotrimer. The cofactor is pyridoxal 5'-phosphate.

The enzyme catalyses 1-aminocyclopropane-1-carboxylate + H2O = 2-oxobutanoate + NH4(+). Functionally, catalyzes a cyclopropane ring-opening reaction, the irreversible conversion of 1-aminocyclopropane-1-carboxylate (ACC) to ammonia and alpha-ketobutyrate. Allows growth on ACC as a nitrogen source. The protein is 1-aminocyclopropane-1-carboxylate deaminase of Burkholderia cenocepacia (strain HI2424).